The following is a 239-amino-acid chain: Demethylmenaquinone methyltransferase (239 aa).

S-adenosyl-L-methionine-binding positions include Thr-60, Asp-81, and 106-107 (DA).

Belongs to the class I-like SAM-binding methyltransferase superfamily. MenG/UbiE family.

It carries out the reaction a 2-demethylmenaquinol + S-adenosyl-L-methionine = a menaquinol + S-adenosyl-L-homocysteine + H(+). The protein operates within quinol/quinone metabolism; menaquinone biosynthesis; menaquinol from 1,4-dihydroxy-2-naphthoate: step 2/2. Functionally, methyltransferase required for the conversion of demethylmenaquinol (DMKH2) to menaquinol (MKH2). This chain is Demethylmenaquinone methyltransferase, found in Staphylococcus haemolyticus (strain JCSC1435).